A 1043-amino-acid polypeptide reads, in one-letter code: Protein translocase subunit SecA (1043 aa).

ATP is bound by residues Gln-143, 161–165, and Asp-665; that span reads GEGKT. Residues 980–1005 show a composition bias toward low complexity; that stretch reads ATAAPAAETTTTAKAADAARQQPPAA. The disordered stretch occupies residues 980–1043; that stretch reads ATAAPAAETT…KYKHCHGRNA (64 aa). The span at 1008–1022 shows a compositional bias: basic and acidic residues; sequence EEQKRQPVHVEKTPG. Zn(2+) is bound by residues Cys-1027, Cys-1029, Cys-1038, and His-1039. A compositionally biased stretch (basic residues) spans 1033 to 1043; it reads KKYKHCHGRNA.

Belongs to the SecA family. In terms of assembly, monomer and homodimer. Part of the essential Sec protein translocation apparatus which comprises SecA, SecYEG and auxiliary proteins SecDF. Other proteins may also be involved. The cofactor is Zn(2+).

Its subcellular location is the cell inner membrane. It localises to the cytoplasm. The catalysed reaction is ATP + H2O + cellular proteinSide 1 = ADP + phosphate + cellular proteinSide 2.. In terms of biological role, part of the Sec protein translocase complex. Interacts with the SecYEG preprotein conducting channel. Has a central role in coupling the hydrolysis of ATP to the transfer of proteins into and across the cell membrane, serving as an ATP-driven molecular motor driving the stepwise translocation of polypeptide chains across the membrane. This chain is Protein translocase subunit SecA, found in Chloroherpeton thalassium (strain ATCC 35110 / GB-78).